The chain runs to 314 residues: Homoserine O-acetyltransferase (314 aa).

Cys-142 acts as the Acyl-thioester intermediate in catalysis. The substrate site is built by Lys-163 and Ser-192. Catalysis depends on His-235, which acts as the Proton acceptor. Glu-237 is an active-site residue. Position 249 (Arg-249) interacts with substrate.

The protein belongs to the MetA family.

The protein localises to the cytoplasm. It carries out the reaction L-homoserine + acetyl-CoA = O-acetyl-L-homoserine + CoA. The protein operates within amino-acid biosynthesis; L-methionine biosynthesis via de novo pathway; O-acetyl-L-homoserine from L-homoserine: step 1/1. Functionally, transfers an acetyl group from acetyl-CoA to L-homoserine, forming acetyl-L-homoserine. This chain is Homoserine O-acetyltransferase, found in Streptococcus pneumoniae serotype 19F (strain G54).